The sequence spans 84 residues: Large ribosomal subunit protein eL34 (84 aa).

The protein belongs to the eukaryotic ribosomal protein eL34 family.

The sequence is that of Large ribosomal subunit protein eL34 (ribL34e) from Pyrobaculum aerophilum (strain ATCC 51768 / DSM 7523 / JCM 9630 / CIP 104966 / NBRC 100827 / IM2).